The chain runs to 275 residues: Diaminopimelate epimerase (275 aa).

3 residues coordinate substrate: Asn12, Gln45, and Asn65. Cys74 (proton donor) is an active-site residue. Substrate is bound by residues 75-76, Asn158, Asn191, and 209-210; these read GN and ER. Cys218 (proton acceptor) is an active-site residue. 219 to 220 is a binding site for substrate; sequence GT.

It belongs to the diaminopimelate epimerase family. Homodimer.

It localises to the cytoplasm. It carries out the reaction (2S,6S)-2,6-diaminopimelate = meso-2,6-diaminopimelate. It participates in amino-acid biosynthesis; L-lysine biosynthesis via DAP pathway; DL-2,6-diaminopimelate from LL-2,6-diaminopimelate: step 1/1. Functionally, catalyzes the stereoinversion of LL-2,6-diaminopimelate (L,L-DAP) to meso-diaminopimelate (meso-DAP), a precursor of L-lysine and an essential component of the bacterial peptidoglycan. The chain is Diaminopimelate epimerase from Shewanella oneidensis (strain ATCC 700550 / JCM 31522 / CIP 106686 / LMG 19005 / NCIMB 14063 / MR-1).